Consider the following 341-residue polypeptide: Heterogeneous nuclear ribonucleoproteins A2/B1 (341 aa).

2 RRM domains span residues 9–92 and 100–179; these read RKLF…ESGK and KKLF…LSRQ. Lysine 10 is covalently cross-linked (Glycyl lysine isopeptide (Lys-Gly) (interchain with G-Cter in SUMO2)). Serine 17 carries the post-translational modification Phosphoserine. Arginine 26 carries the post-translational modification Omega-N-methylarginine. Serine 73 carries the post-translational modification Phosphoserine. N6,N6-dimethyllysine; alternate is present on lysine 92. Lysine 92 participates in a covalent cross-link: Glycyl lysine isopeptide (Lys-Gly) (interchain with G-Cter in SUMO2); alternate. Glycyl lysine isopeptide (Lys-Gly) (interchain with G-Cter in SUMO2) cross-links involve residues lysine 100, lysine 108, and lysine 125. Phosphothreonine is present on threonine 128. Serine 137 carries the post-translational modification Phosphoserine. Residue lysine 140 forms a Glycyl lysine isopeptide (Lys-Gly) (interchain with G-Cter in SUMO2) linkage. Threonine 147 is subject to Phosphothreonine. Glycyl lysine isopeptide (Lys-Gly) (interchain with G-Cter in SUMO2); alternate cross-links involve residues lysine 156 and lysine 161. Lysine 156 and lysine 161 each carry N6-acetyllysine; alternate. Threonine 164 bears the Phosphothreonine mark. Lysine 174 is covalently cross-linked (Glycyl lysine isopeptide (Lys-Gly) (interchain with G-Cter in SUMO2)). Phosphoserine is present on residues serine 177 and serine 189. The interval 181 to 341 is disordered; it reads MQEVQSSRSG…SGGYGGRSRY (161 aa). Positions 190–211 are enriched in gly residues; the sequence is GRGGNFGFGDSRGGGGNFGPGP. Arginine 191 carries the asymmetric dimethylarginine; alternate modification. Position 191 is a dimethylated arginine; alternate (arginine 191). Arginine 191 is modified (omega-N-methylarginine; alternate). A Phosphoserine modification is found at serine 200. Asymmetric dimethylarginine; alternate is present on arginine 201. Arginine 201 bears the Dimethylated arginine; alternate mark. Arginine 201 is subject to Omega-N-methylarginine; alternate. Serine 213 carries the phosphoserine modification. Omega-N-methylarginine is present on arginine 216. A phosphoserine mark is found at serine 219 and serine 224. An Omega-N-methylarginine modification is found at arginine 226. The residue at position 247 (serine 247) is a Phosphoserine. An Asymmetric dimethylarginine; alternate modification is found at arginine 254. Residue arginine 254 is modified to Omega-N-methylarginine; alternate. The interval 296–335 is nuclear targeting sequence; the sequence is QQPSNYGPMKSGNFGGSRNMGGPYGGGNYGPGGSGGSGGY. The span at 308-341 shows a compositional bias: gly residues; it reads NFGGSRNMGGPYGGGNYGPGGSGGSGGYGGRSRY. Serine 312 carries the post-translational modification Phosphoserine. Arginine 313 carries the omega-N-methylarginine modification. Residue tyrosine 319 is modified to Phosphotyrosine. Phosphoserine occurs at positions 329 and 332. Phosphotyrosine is present on tyrosine 335. Arginine 338 is subject to Omega-N-methylarginine.

Identified in the spliceosome C complex. Identified in a IGF2BP1-dependent mRNP granule complex containing untranslated mRNAs. Interacts with IGF2BP1. Interacts with C9orf72. Interacts with DGCR8. Interacts with TARDBP. Interacts with CKAP5. Interacts with PPIA/CYPA. Interacts (via C-terminus) with FAM76B; the interaction results in retention of HNRNPA2B1 in the nucleus and inhibition of the NF-kappa-B-mediated inflammatory pathway. Interacts with NF-kappa-B inhibitors NFKBIA and NFKBIE; the interaction may be mediated by the RRM2 domain of HNRNPA2B1, and HNRNPA2B1 may interact simultaneously with FAM76B and either NFKBIA or NFKBIE to form a complex. Post-translationally, sumoylated in exosomes, promoting miRNAs-binding. Asymmetric dimethylation at Arg-254 constitutes the major methylation site. According to a report, methylation affects subcellular location and promotes nuclear localization. According to another report, methylation at Arg-254 does not influence nucleocytoplasmic shuttling.

The protein localises to the nucleus. It localises to the nucleoplasm. It is found in the cytoplasmic granule. The protein resides in the secreted. Its subcellular location is the extracellular exosome. In terms of biological role, heterogeneous nuclear ribonucleoprotein (hnRNP) that associates with nascent pre-mRNAs, packaging them into hnRNP particles. The hnRNP particle arrangement on nascent hnRNA is non-random and sequence-dependent and serves to condense and stabilize the transcripts and minimize tangling and knotting. Packaging plays a role in various processes such as transcription, pre-mRNA processing, RNA nuclear export, subcellular location, mRNA translation and stability of mature mRNAs. Forms hnRNP particles with at least 20 other different hnRNP and heterogeneous nuclear RNA in the nucleus. Involved in transport of specific mRNAs to the cytoplasm in oligodendrocytes and neurons: acts by specifically recognizing and binding the A2RE (21 nucleotide hnRNP A2 response element) or the A2RE11 (derivative 11 nucleotide oligonucleotide) sequence motifs present on some mRNAs, and promotes their transport to the cytoplasm. Specifically binds single-stranded telomeric DNA sequences, protecting telomeric DNA repeat against endonuclease digestion. Also binds other RNA molecules, such as primary miRNA (pri-miRNAs): acts as a nuclear 'reader' of the N6-methyladenosine (m6A) mark by specifically recognizing and binding a subset of nuclear m6A-containing pri-miRNAs. Binding to m6A-containing pri-miRNAs promotes pri-miRNA processing by enhancing binding of DGCR8 to pri-miRNA transcripts. Involved in miRNA sorting into exosomes following sumoylation, possibly by binding (m6A)-containing pre-miRNAs. Acts as a regulator of efficiency of mRNA splicing, possibly by binding to m6A-containing pre-mRNAs. Plays a role in the splicing of pyruvate kinase PKM by binding repressively to sequences flanking PKM exon 9, inhibiting exon 9 inclusion and resulting in exon 10 inclusion and production of the PKM M2 isoform. This chain is Heterogeneous nuclear ribonucleoproteins A2/B1 (HNRNPA2B1), found in Saguinus oedipus (Cotton-top tamarin).